The sequence spans 373 residues: Outer membrane protein assembly factor BamC (373 aa).

Residues 1 to 16 (MLKQVTPLVLIAAVTA) form the signal peptide. Residue cysteine 17 is the site of N-palmitoyl cysteine attachment. Cysteine 17 is lipidated: S-diacylglycerol cysteine.

It belongs to the BamC family. As to quaternary structure, part of the Bam complex.

Its subcellular location is the cell outer membrane. Its function is as follows. Part of the outer membrane protein assembly complex, which is involved in assembly and insertion of beta-barrel proteins into the outer membrane. This chain is Outer membrane protein assembly factor BamC, found in Shewanella sediminis (strain HAW-EB3).